Here is a 155-residue protein sequence, read N- to C-terminus: Large ribosomal subunit protein eL24B (155 aa).

The residue at position 7 (serine 7) is a Phosphoserine. The tract at residues 66-155 (EVAKKRSRKT…AFQKVAATSR (90 aa)) is disordered. Residues 89-129 (LIKERRSLKPEVRKANREEKLKANKEKKRAEKAARKAEKAK) are compositionally biased toward basic and acidic residues.

It belongs to the eukaryotic ribosomal protein eL24 family. Component of the large ribosomal subunit (LSU). Mature yeast ribosomes consist of a small (40S) and a large (60S) subunit. The 40S small subunit contains 1 molecule of ribosomal RNA (18S rRNA) and 33 different proteins (encoded by 57 genes). The large 60S subunit contains 3 rRNA molecules (25S, 5.8S and 5S rRNA) and 46 different proteins (encoded by 81 genes).

The protein localises to the cytoplasm. Its function is as follows. Component of the ribosome, a large ribonucleoprotein complex responsible for the synthesis of proteins in the cell. The small ribosomal subunit (SSU) binds messenger RNAs (mRNAs) and translates the encoded message by selecting cognate aminoacyl-transfer RNA (tRNA) molecules. The large subunit (LSU) contains the ribosomal catalytic site termed the peptidyl transferase center (PTC), which catalyzes the formation of peptide bonds, thereby polymerizing the amino acids delivered by tRNAs into a polypeptide chain. The nascent polypeptides leave the ribosome through a tunnel in the LSU and interact with protein factors that function in enzymatic processing, targeting, and the membrane insertion of nascent chains at the exit of the ribosomal tunnel. This is Large ribosomal subunit protein eL24B from Saccharomyces cerevisiae (strain ATCC 204508 / S288c) (Baker's yeast).